Reading from the N-terminus, the 298-residue chain is Ribosomal RNA processing protein 36 homolog (298 aa).

The interval M1–M131 is disordered. Residues S14–E56 show a composition bias toward acidic residues. 2 stretches are compositionally biased toward polar residues: residues Q61–S70 and L83–L92. Coiled-coil stretches lie at residues I88–K112 and R196–L228. The span at F98–S111 shows a compositional bias: basic and acidic residues. The tract at residues I279 to N298 is disordered.

The protein belongs to the RRP36 family.

It localises to the nucleus. The protein localises to the nucleolus. Its function is as follows. Involved in the early processing steps of the pre-rRNA in the maturation pathway leading to the 18S rRNA. The chain is Ribosomal RNA processing protein 36 homolog from Dictyostelium discoideum (Social amoeba).